The chain runs to 656 residues: Methylenetetrahydrofolate reductase (NADPH) (656 aa).

Residues 1 to 46 (MVNEARGNDSLNPCLEGSASSSSESSKDSSRCSTPGLDPERHERLR) form a disordered region. Phosphoserine is present on residues Ser10, Ser18, Ser20, Ser21, Ser23, Ser25, Ser26, Ser29, and Ser30. Residue Thr34 is modified to Phosphothreonine. The active-site Proton donor/acceptor is the Glu63. Residues 63-68 (EFFPPR) and 94-95 (TW) each bind NAD(+). At Thr94 the chain carries Phosphothreonine. 94-95 (TW) provides a ligand contact to FAD. Ser103 carries the post-translational modification Phosphoserine. Residues His127, 157–159 (RGD), 174–175 (YA), Tyr197, 201–204 (HPEA), Asp210, and Lys217 contribute to the FAD site. Asp159 contacts substrate. Positions 228, 321, and 325 each coordinate substrate. A Phosphoserine modification is found at Ser394. Residue Thr451 is modified to Phosphothreonine. S-adenosyl-L-methionine contacts are provided by residues Asn456, 461–464 (AAET), 481–485 (TINSQ), Thr560, and Thr573.

The protein belongs to the methylenetetrahydrofolate reductase family. In terms of assembly, homodimer. The cofactor is FAD. Phosphorylation of an N-terminal serine-rich phosphorylation region increases sensitivity to S-adenosylmethionine and inhibition.

The enzyme catalyses (6S)-5-methyl-5,6,7,8-tetrahydrofolate + NADP(+) = (6R)-5,10-methylene-5,6,7,8-tetrahydrofolate + NADPH + H(+). Its pathway is one-carbon metabolism; tetrahydrofolate interconversion. Its activity is regulated as follows. Allosterically regulated by S-adenosylmethionine (SAM). In terms of biological role, catalyzes the conversion of 5,10-methylenetetrahydrofolate to 5-methyltetrahydrofolate, a cosubstrate for homocysteine remethylation to methionine. Represents a key regulatory connection between the folate and methionine cycles. This is Methylenetetrahydrofolate reductase (NADPH) (MTHFR) from Macaca fascicularis (Crab-eating macaque).